The primary structure comprises 373 residues: Chloroperoxidase (373 aa).

The signal sequence occupies residues 1-20; it reads MFSKVLPFVGAVAALPHSVR. Residue glutamine 21 is modified to Pyrrolidone carboxylic acid. The N-linked (GlcNAc...) asparagine glycan is linked to asparagine 33. Residue cysteine 50 participates in heme binding. An intrachain disulfide couples cysteine 100 to cysteine 108. The N-linked (GlcNAc...) asparagine glycan is linked to asparagine 114. Mn(2+)-binding residues include glutamate 125, histidine 126, and serine 129. Glutamate 204 is an active-site residue. N-linked (GlcNAc...) asparagine glycosylation occurs at asparagine 237. O-linked (Man) threonine glycosylation occurs at threonine 259. O-linked (Man) serine glycosylation is found at serine 260, serine 262, serine 263, and serine 269. Threonine 271 is a glycosylation site (O-linked (Man) threonine). A glycan (O-linked (Man) serine) is linked at serine 272. Threonine 273 carries an O-linked (Man) threonine glycan. O-linked (Man...) threonine glycans are attached at residues threonine 296, threonine 304, and threonine 314. The propeptide occupies 322 to 373; the sequence is EAAPAATTSMAVFKNPYLEAIGTQDIKNQQAYVSSKAAAMASAMAANKARNL.

The protein belongs to the chloroperoxidase family. It depends on heme b as a cofactor. The cofactor is Mn(2+). N- and O-glycosylated.

It catalyses the reaction RH + Cl(-) + H2O2 = RCl + 2 H2O.. In terms of biological role, catalyzes peroxidative halogenations involved in the biosynthesis of clardariomycin (2,2-dichloro-1,3-cyclo-pentenedione). The enzyme also has potent catalase activity and in the absence of halide ion, acts as a peroxidase similar to plant peroxidases. The protein is Chloroperoxidase (CPO) of Leptoxyphium fumago (Caldariomyces fumago).